The primary structure comprises 130 residues: Small ribosomal subunit protein uS9 (130 aa).

Belongs to the universal ribosomal protein uS9 family.

This is Small ribosomal subunit protein uS9 from Idiomarina loihiensis (strain ATCC BAA-735 / DSM 15497 / L2-TR).